Consider the following 494-residue polypeptide: Cytochrome P450 2C23 (494 aa).

Serine 131 is modified (phosphoserine). Residues lysine 253 and lysine 379 each carry the N6-acetyllysine modification. Cysteine 439 lines the heme pocket.

This sequence belongs to the cytochrome P450 family. Requires heme as cofactor. In terms of tissue distribution, expressed in kidney and liver. Expressed in cortical tubules of kidney (at protein level).

It localises to the endoplasmic reticulum membrane. The protein resides in the microsome membrane. The enzyme catalyses (5Z,8Z,11Z,14Z)-eicosatetraenoate + reduced [NADPH--hemoprotein reductase] + O2 = (8R,9S)-epoxy-(5Z,11Z,14Z)-eicosatrienoate + oxidized [NADPH--hemoprotein reductase] + H2O + H(+). It catalyses the reaction (5Z,8Z,11Z,14Z)-eicosatetraenoate + reduced [NADPH--hemoprotein reductase] + O2 = (11R,12S)-epoxy-(5Z,8Z,14Z)-eicosatrienoate + oxidized [NADPH--hemoprotein reductase] + H2O + H(+). The catalysed reaction is (5Z,8Z,11Z,14Z)-eicosatetraenoate + reduced [NADPH--hemoprotein reductase] + O2 = (11S,12R)-epoxy-(5Z,8Z,14Z)-eicosatrienoate + oxidized [NADPH--hemoprotein reductase] + H2O + H(+). It carries out the reaction (5Z,8Z,11Z,14Z)-eicosatetraenoate + reduced [NADPH--hemoprotein reductase] + O2 = (14R,15S)-epoxy-(5Z,8Z,11Z)-eicosatrienoate + oxidized [NADPH--hemoprotein reductase] + H2O + H(+). The enzyme catalyses (5Z,8Z,11Z,14Z)-eicosatetraenoate + reduced [NADPH--hemoprotein reductase] + O2 = (14S,15R)-epoxy-(5Z,8Z,11Z)-eicosatrienoate + oxidized [NADPH--hemoprotein reductase] + H2O + H(+). It catalyses the reaction (5Z,8Z,11Z,14Z,17Z)-eicosapentaenoate + reduced [NADPH--hemoprotein reductase] + O2 = 8,9-epoxy-(5Z,11Z,14Z,17Z)-eicosatetraenoate + oxidized [NADPH--hemoprotein reductase] + H2O + H(+). The catalysed reaction is (5Z,8Z,11Z,14Z,17Z)-eicosapentaenoate + reduced [NADPH--hemoprotein reductase] + O2 = 11,12-epoxy-(5Z,8Z,14Z,17Z)-eicosatetraenoate + oxidized [NADPH--hemoprotein reductase] + H2O + H(+). It carries out the reaction (5Z,8Z,11Z,14Z,17Z)-eicosapentaenoate + reduced [NADPH--hemoprotein reductase] + O2 = 14,15-epoxy-(5Z,8Z,11Z,17Z)-eicosatetraenoate + oxidized [NADPH--hemoprotein reductase] + H2O + H(+). The enzyme catalyses (5Z,8Z,11Z,14Z,17Z)-eicosapentaenoate + reduced [NADPH--hemoprotein reductase] + O2 = (17R,18S)-epoxy-(5Z,8Z,11Z,14Z)-eicosatetraenoate + oxidized [NADPH--hemoprotein reductase] + H2O + H(+). It catalyses the reaction (5Z,8Z,11Z,14Z,17Z)-eicosapentaenoate + reduced [NADPH--hemoprotein reductase] + O2 = (17S,18R)-epoxy-(5Z,8Z,11Z,14Z)-eicosatetraenoate + oxidized [NADPH--hemoprotein reductase] + H2O + H(+). The catalysed reaction is 20-hydroxy-(5Z,8Z,11Z,14Z)-eicosatetraenoate + reduced [NADPH--hemoprotein reductase] + O2 = 20-hydroxy-8,9-epoxy-(5Z,11Z,14Z)-eicosatrienoate + oxidized [NADPH--hemoprotein reductase] + H2O + H(+). It participates in lipid metabolism; arachidonate metabolism. Functionally, a cytochrome P450 monooxygenase involved in polyunsaturated fatty acids (PUFAs) metabolism and signaling. Catalyzes preferentially the epoxidation of double bonds of PUFAs. Converts arachidonic acid (ARA, C20:4(n-6)) primarily to stereospecific products 8R,9S-, 11R,12S-, and 14S,15R-EET. Plays a major role in the formation of EETs and hydroxy-EETs (HEETs) in kidney. Via EETs may inhibit the epithelial sodium channels (ENaCs) in nephron segments, preventing excessive sodium absorption during high dietary salt intake. Participates in the formation of anti-inflammatory hydroxyepoxyeicosatrienoic acids (HEETs) by converting 20-hydroxyeicosatetraenoic acid (20-HETE) to 20,8,9-HEET, an activator of PPARA. Metabolizes eicosapentaenoic acid (EPA, C20:5(n-3)) to epoxyeicosatetraenoic acid (EETeTr) regioisomers, 8,9-, 11,12-, 14,15-, and 17,18-EETeTr, preferentially producing 17R,18S enantiomer. Mechanistically, uses molecular oxygen inserting one oxygen atom into a substrate, and reducing the second into a water molecule, with two electrons provided by NADPH via cytochrome P450 reductase (NADPH--hemoprotein reductase). This Rattus norvegicus (Rat) protein is Cytochrome P450 2C23.